We begin with the raw amino-acid sequence, 439 residues long: Agnestins biosynthesis cluster transcriptional coactivator AgnL9 (439 aa).

Positions 79 to 149 constitute an HTH iclR-type domain; it reads MTIQTQLLAC…EPGHITHSAL (71 aa). Residues 109-128 constitute a DNA-binding region (H-T-H motif); the sequence is MKDVSELIDVPENQLGRIVR.

The protein localises to the nucleus. Transcriptional coactivator; part of the gene cluster that mediates the biosynthesis of agnestins, dihydroxy-xanthone metabolites. The chain is Agnestins biosynthesis cluster transcriptional coactivator AgnL9 from Paecilomyces divaricatus (Penicillium divaricatum).